The chain runs to 708 residues: Leukotoxin translocation ATP-binding protein LktB (708 aa).

A Peptidase C39 domain is found at methionine 1 to valine 126. An ABC transmembrane type-1 domain is found at phenylalanine 155 to glutamine 437. The next 5 helical transmembrane spans lie at leucine 159–valine 179, leucine 192–leucine 212, alanine 270–tyrosine 290, leucine 296–leucine 316, and valine 389–glycine 409. In terms of domain architecture, ABC transporter spans isoleucine 469–glutamine 704. Glycine 503–serine 510 contacts ATP.

Belongs to the ABC transporter superfamily. Protein-1 exporter (TC 3.A.1.109) family. In terms of assembly, homodimer.

The protein localises to the cell inner membrane. The catalysed reaction is ATP + H2O + proteinSide 1 = ADP + phosphate + proteinSide 2.. Part of the ABC transporter complex LktBD involved in leukotoxin export. Transmembrane domains (TMD) form a pore in the inner membrane and the ATP-binding domain (NBD) is responsible for energy generation. The chain is Leukotoxin translocation ATP-binding protein LktB (lktB) from Mannheimia haemolytica (Pasteurella haemolytica).